A 131-amino-acid polypeptide reads, in one-letter code: Large ribosomal subunit protein bL12c (131 aa).

A compositionally biased stretch (basic and acidic residues) spans 106–125 (KDNTNKENSEEIKQQLEEAG). The disordered stretch occupies residues 106–131 (KDNTNKENSEEIKQQLEEAGAKVSIK).

Belongs to the bacterial ribosomal protein bL12 family. In terms of assembly, homodimer. Part of the ribosomal stalk of the 50S ribosomal subunit. Forms a multimeric L10(L12)X complex, where L10 forms an elongated spine to which 2 to 4 L12 dimers bind in a sequential fashion. Binds GTP-bound translation factors.

The protein localises to the plastid. The protein resides in the chloroplast. Its function is as follows. Forms part of the ribosomal stalk which helps the ribosome interact with GTP-bound translation factors. Is thus essential for accurate translation. The polypeptide is Large ribosomal subunit protein bL12c (Gracilaria tenuistipitata var. liui (Red alga)).